Consider the following 463-residue polypeptide: Glutamate--tRNA ligase (463 aa).

The 'HIGH' region motif lies at 9–19 (PSPTGYLHVGG). The span at 115–129 (AGEKPRYDGTWRPEA) shows a compositional bias: basic and acidic residues. The tract at residues 115 to 136 (AGEKPRYDGTWRPEAGKTLPAI) is disordered. The 'KMSKS' region motif lies at 241–245 (KLSKR). ATP is bound at residue K244.

Belongs to the class-I aminoacyl-tRNA synthetase family. Glutamate--tRNA ligase type 1 subfamily. In terms of assembly, monomer.

The protein localises to the cytoplasm. The catalysed reaction is tRNA(Glu) + L-glutamate + ATP = L-glutamyl-tRNA(Glu) + AMP + diphosphate. Its function is as follows. Catalyzes the attachment of glutamate to tRNA(Glu) in a two-step reaction: glutamate is first activated by ATP to form Glu-AMP and then transferred to the acceptor end of tRNA(Glu). This chain is Glutamate--tRNA ligase, found in Janthinobacterium sp. (strain Marseille) (Minibacterium massiliensis).